An 89-amino-acid chain; its full sequence is Small ribosomal subunit protein uS15 (89 aa).

Over residues 1-18 the composition is skewed to basic and acidic residues; it reads MALSAQEKDAIVKEHQTS. The segment at 1–25 is disordered; that stretch reads MALSAQEKDAIVKEHQTSETDTGSP.

This sequence belongs to the universal ribosomal protein uS15 family. As to quaternary structure, part of the 30S ribosomal subunit. Forms a bridge to the 50S subunit in the 70S ribosome, contacting the 23S rRNA.

In terms of biological role, one of the primary rRNA binding proteins, it binds directly to 16S rRNA where it helps nucleate assembly of the platform of the 30S subunit by binding and bridging several RNA helices of the 16S rRNA. Its function is as follows. Forms an intersubunit bridge (bridge B4) with the 23S rRNA of the 50S subunit in the ribosome. The chain is Small ribosomal subunit protein uS15 from Teredinibacter turnerae (strain ATCC 39867 / T7901).